A 649-amino-acid chain; its full sequence is Microtubule-associated protein VP6 (649 aa).

It is found in the virion. The protein resides in the host cytoplasm. Its subcellular location is the host cytoskeleton. Minor inner capsid component. Displays NTPase and RNA 5'-triphosphatase (RTPase) activities. May function as a cofactor of polymerase VP2. Associates with microtubules and plays a role in the formation, structural organization and morphology of viral inclusions, where the assembly of cores and the replication of viral RNA occur. The sequence is that of Microtubule-associated protein VP6 (S6) from Cryphonectria parasitica (Chestnut blight fungus).